We begin with the raw amino-acid sequence, 272 residues long: 4-hydroxy-tetrahydrodipicolinate reductase (272 aa).

NAD(+) contacts are provided by residues 11–16 (GVSGRM) and Glu37. Arg38 contributes to the NADP(+) binding site. NAD(+) is bound by residues 101 to 103 (GTT) and 125 to 128 (AGNM). His158 functions as the Proton donor/acceptor in the catalytic mechanism. Position 159 (His159) interacts with (S)-2,3,4,5-tetrahydrodipicolinate. Lys162 serves as the catalytic Proton donor. Residue 168-169 (GT) coordinates (S)-2,3,4,5-tetrahydrodipicolinate.

It belongs to the DapB family.

Its subcellular location is the cytoplasm. It carries out the reaction (S)-2,3,4,5-tetrahydrodipicolinate + NAD(+) + H2O = (2S,4S)-4-hydroxy-2,3,4,5-tetrahydrodipicolinate + NADH + H(+). It catalyses the reaction (S)-2,3,4,5-tetrahydrodipicolinate + NADP(+) + H2O = (2S,4S)-4-hydroxy-2,3,4,5-tetrahydrodipicolinate + NADPH + H(+). It participates in amino-acid biosynthesis; L-lysine biosynthesis via DAP pathway; (S)-tetrahydrodipicolinate from L-aspartate: step 4/4. Its function is as follows. Catalyzes the conversion of 4-hydroxy-tetrahydrodipicolinate (HTPA) to tetrahydrodipicolinate. The sequence is that of 4-hydroxy-tetrahydrodipicolinate reductase from Roseobacter denitrificans (strain ATCC 33942 / OCh 114) (Erythrobacter sp. (strain OCh 114)).